The following is a 213-amino-acid chain: ATP phosphoribosyltransferase (213 aa).

Belongs to the ATP phosphoribosyltransferase family. Short subfamily. Heteromultimer composed of HisG and HisZ subunits.

It is found in the cytoplasm. The enzyme catalyses 1-(5-phospho-beta-D-ribosyl)-ATP + diphosphate = 5-phospho-alpha-D-ribose 1-diphosphate + ATP. It functions in the pathway amino-acid biosynthesis; L-histidine biosynthesis; L-histidine from 5-phospho-alpha-D-ribose 1-diphosphate: step 1/9. Its function is as follows. Catalyzes the condensation of ATP and 5-phosphoribose 1-diphosphate to form N'-(5'-phosphoribosyl)-ATP (PR-ATP). Has a crucial role in the pathway because the rate of histidine biosynthesis seems to be controlled primarily by regulation of HisG enzymatic activity. The polypeptide is ATP phosphoribosyltransferase (Anoxybacillus flavithermus (strain DSM 21510 / WK1)).